The sequence spans 491 residues: Arginine decarboxylase (491 aa).

K227 carries the post-translational modification N6-(pyridoxal phosphate)lysine.

This sequence belongs to the Orn/Lys/Arg decarboxylase class-I family. The cofactor is pyridoxal 5'-phosphate.

The protein resides in the cytoplasm. The enzyme catalyses L-arginine + H(+) = agmatine + CO2. It functions in the pathway amine and polyamine biosynthesis; agmatine biosynthesis; agmatine from L-arginine: step 1/1. Functionally, catalyzes the formation of agmatine from arginine. The sequence is that of Arginine decarboxylase (speA) from Halalkalibacterium halodurans (strain ATCC BAA-125 / DSM 18197 / FERM 7344 / JCM 9153 / C-125) (Bacillus halodurans).